Reading from the N-terminus, the 69-residue chain is DNA-directed RNA polymerase subunit omega (69 aa).

Belongs to the RNA polymerase subunit omega family. In terms of assembly, the RNAP catalytic core consists of 2 alpha, 1 beta, 1 beta' and 1 omega subunit. When a sigma factor is associated with the core the holoenzyme is formed, which can initiate transcription.

The enzyme catalyses RNA(n) + a ribonucleoside 5'-triphosphate = RNA(n+1) + diphosphate. Its function is as follows. Promotes RNA polymerase assembly. Latches the N- and C-terminal regions of the beta' subunit thereby facilitating its interaction with the beta and alpha subunits. This Geotalea daltonii (strain DSM 22248 / JCM 15807 / FRC-32) (Geobacter daltonii) protein is DNA-directed RNA polymerase subunit omega.